The primary structure comprises 374 residues: Small ribosomal subunit protein uS4m (374 aa).

Residues 259-323 (GRLENFLMRL…KKLYFFIKSK (65 aa)) form the S4 RNA-binding domain.

Belongs to the universal ribosomal protein uS4 family.

The protein resides in the mitochondrion. The sequence is that of Small ribosomal subunit protein uS4m (RPS4) from Acanthamoeba castellanii (Amoeba).